Consider the following 570-residue polypeptide: Sulfite reductase [NADPH] hemoprotein beta-component (570 aa).

Positions 434, 440, 479, and 483 each coordinate [4Fe-4S] cluster. Cysteine 483 is a binding site for siroheme.

Belongs to the nitrite and sulfite reductase 4Fe-4S domain family. In terms of assembly, alpha(8)-beta(8). The alpha component is a flavoprotein, the beta component is a hemoprotein. It depends on siroheme as a cofactor. Requires [4Fe-4S] cluster as cofactor.

The enzyme catalyses hydrogen sulfide + 3 NADP(+) + 3 H2O = sulfite + 3 NADPH + 4 H(+). It functions in the pathway sulfur metabolism; hydrogen sulfide biosynthesis; hydrogen sulfide from sulfite (NADPH route): step 1/1. Its function is as follows. Component of the sulfite reductase complex that catalyzes the 6-electron reduction of sulfite to sulfide. This is one of several activities required for the biosynthesis of L-cysteine from sulfate. This chain is Sulfite reductase [NADPH] hemoprotein beta-component, found in Salmonella arizonae (strain ATCC BAA-731 / CDC346-86 / RSK2980).